A 399-amino-acid chain; its full sequence is Tryptophan synthase beta chain (399 aa).

K92 bears the N6-(pyridoxal phosphate)lysine mark.

It belongs to the TrpB family. As to quaternary structure, tetramer of two alpha and two beta chains. It depends on pyridoxal 5'-phosphate as a cofactor.

It catalyses the reaction (1S,2R)-1-C-(indol-3-yl)glycerol 3-phosphate + L-serine = D-glyceraldehyde 3-phosphate + L-tryptophan + H2O. It participates in amino-acid biosynthesis; L-tryptophan biosynthesis; L-tryptophan from chorismate: step 5/5. Functionally, the beta subunit is responsible for the synthesis of L-tryptophan from indole and L-serine. This chain is Tryptophan synthase beta chain, found in Exiguobacterium sibiricum (strain DSM 17290 / CCUG 55495 / CIP 109462 / JCM 13490 / 255-15).